The primary structure comprises 209 residues: Protein-L-isoaspartate O-methyltransferase (209 aa).

Residue Ser-60 is part of the active site.

The protein belongs to the methyltransferase superfamily. L-isoaspartyl/D-aspartyl protein methyltransferase family.

It localises to the cytoplasm. It catalyses the reaction [protein]-L-isoaspartate + S-adenosyl-L-methionine = [protein]-L-isoaspartate alpha-methyl ester + S-adenosyl-L-homocysteine. Its function is as follows. Catalyzes the methyl esterification of L-isoaspartyl residues in peptides and proteins that result from spontaneous decomposition of normal L-aspartyl and L-asparaginyl residues. It plays a role in the repair and/or degradation of damaged proteins. The polypeptide is Protein-L-isoaspartate O-methyltransferase (Photobacterium profundum (strain SS9)).